A 409-amino-acid chain; its full sequence is CUB domain-containing protein (409 aa).

Positions 1-18 (MFLFSLTVLSALVLITES) are cleaved as a signal peptide. A compositionally biased stretch (low complexity) spans 154 to 229 (TEASTTAQET…TTAPTTAPAP (76 aa)). The tract at residues 154 to 230 (TEASTTAQET…TAPTTAPAPI (77 aa)) is disordered. Cysteine 232 and cysteine 257 are joined by a disulfide. One can recognise a CUB domain in the interval 232–338 (CGGVLRGRGT…QEYVDYYYYD (107 aa)). The segment at 389-409 (VQGAADSESEASASSESSDED) is disordered. The segment covering 392 to 409 (AADSESEASASSESSDED) has biased composition (low complexity).

In terms of tissue distribution, component of the acid-insoluble and acid-soluble organic matrix of the aragonitic skeleton (at protein level).

Its subcellular location is the secreted. The protein is CUB domain-containing protein of Acropora millepora (Staghorn coral).